We begin with the raw amino-acid sequence, 61 residues long: Transcription elongation factor Spt4 (61 aa).

Zn(2+)-binding residues include Cys-6, Cys-9, Cys-18, and Cys-21.

It belongs to the archaeal Spt4 family. As to quaternary structure, heterodimer composed of Spt4 and Spt5.

Stimulates transcription elongation. The polypeptide is Transcription elongation factor Spt4 (Pyrococcus furiosus (strain ATCC 43587 / DSM 3638 / JCM 8422 / Vc1)).